A 147-amino-acid chain; its full sequence is D-aminoacyl-tRNA deacylase (147 aa).

Residues glycine 137–proline 138 carry the Gly-cisPro motif, important for rejection of L-amino acids motif.

Belongs to the DTD family. Homodimer.

It is found in the cytoplasm. It carries out the reaction glycyl-tRNA(Ala) + H2O = tRNA(Ala) + glycine + H(+). The enzyme catalyses a D-aminoacyl-tRNA + H2O = a tRNA + a D-alpha-amino acid + H(+). Functionally, an aminoacyl-tRNA editing enzyme that deacylates mischarged D-aminoacyl-tRNAs. Also deacylates mischarged glycyl-tRNA(Ala), protecting cells against glycine mischarging by AlaRS. Acts via tRNA-based rather than protein-based catalysis; rejects L-amino acids rather than detecting D-amino acids in the active site. By recycling D-aminoacyl-tRNA to D-amino acids and free tRNA molecules, this enzyme counteracts the toxicity associated with the formation of D-aminoacyl-tRNA entities in vivo and helps enforce protein L-homochirality. The sequence is that of D-aminoacyl-tRNA deacylase from Levilactobacillus brevis (strain ATCC 367 / BCRC 12310 / CIP 105137 / JCM 1170 / LMG 11437 / NCIMB 947 / NCTC 947) (Lactobacillus brevis).